The chain runs to 345 residues: S-adenosylmethionine:tRNA ribosyltransferase-isomerase (345 aa).

This sequence belongs to the QueA family. Monomer.

It is found in the cytoplasm. The enzyme catalyses 7-aminomethyl-7-carbaguanosine(34) in tRNA + S-adenosyl-L-methionine = epoxyqueuosine(34) in tRNA + adenine + L-methionine + 2 H(+). It functions in the pathway tRNA modification; tRNA-queuosine biosynthesis. Its function is as follows. Transfers and isomerizes the ribose moiety from AdoMet to the 7-aminomethyl group of 7-deazaguanine (preQ1-tRNA) to give epoxyqueuosine (oQ-tRNA). This Anaeromyxobacter dehalogenans (strain 2CP-1 / ATCC BAA-258) protein is S-adenosylmethionine:tRNA ribosyltransferase-isomerase.